The primary structure comprises 67 residues: Large ribosomal subunit protein uL29 (67 aa).

This sequence belongs to the universal ribosomal protein uL29 family.

This Alkaliphilus metalliredigens (strain QYMF) protein is Large ribosomal subunit protein uL29.